The sequence spans 327 residues: Small ribosomal subunit protein RACK1z (327 aa).

7 WD repeats span residues 13–44, 61–91, 103–133, 148–180, 192–222, 233–262, and 293–323; these read AHTDMVTAIATPIDNADIIVSASRDKSIILWK, GHSHFVEDVVLSSDGQFALSGSWDGELRLWD, GHTKDVLSVAFSLDNRQIVSASRDRTIKLWN, GHRDWVSCVRFSPNTLQPTIVSASWDKTVKVWN, GHTGYVSTVAVSPDGSLCASGGKDGVVLLWD, EANSVIHALCFSPNRYWLCAATEHGIKIWD, and RKVIYCTSLNWSADGSTLFSGYTDGVIRVWG.

It belongs to the WD repeat G protein beta family. Ribosomal protein RACK1 subfamily. As to quaternary structure, homodimer and heterodimer with RACK1B or RACK1C. Interacts with NUDT7. Interacts with GB1, MEKK1, MKK4, MKK5, MPK3 and MPK6, but not with GPA1 or MPK4. Interacts with OFUT20. In terms of tissue distribution, widely expressed.

Its subcellular location is the cytoplasm. The protein resides in the nucleus. Major component of the RACK1 regulatory proteins that play a role in multiple signal transduction pathways. Involved in multiple hormone responses and developmental processes. MAPK cascade scaffolding protein involved in the protease IV and ArgC signaling pathway but not the flg22 pathway. In Arabidopsis thaliana (Mouse-ear cress), this protein is Small ribosomal subunit protein RACK1z.